Reading from the N-terminus, the 434-residue chain is Mitochondrial distribution and morphology protein 12 (434 aa).

The 434-residue stretch at 1–434 (MSIDIDWERA…VYPSFWTFLV (434 aa)) folds into the SMP-LTD domain. Over residues 70–83 (YEEDDNENFSESSE) the composition is skewed to acidic residues. 2 disordered regions span residues 70 to 141 (YEED…LRSP) and 181 to 277 (TPLG…LPPR). Basic and acidic residues predominate over residues 86-97 (SPTREPVDRYGS). Residues 215-237 (SAQSRPSTANTGNTLLSRGSMSS) are compositionally biased toward polar residues.

Belongs to the MDM12 family. As to quaternary structure, component of the ER-mitochondria encounter structure (ERMES) or MDM complex, composed of MMM1, MDM10, MDM12 and MDM34. An MMM1 homodimer associates with one molecule of MDM12 on each side in a pairwise head-to-tail manner, and the SMP-LTD domains of MMM1 and MDM12 generate a continuous hydrophobic tunnel for phospholipid trafficking.

It is found in the mitochondrion outer membrane. It localises to the endoplasmic reticulum membrane. Its function is as follows. Component of the ERMES/MDM complex, which serves as a molecular tether to connect the endoplasmic reticulum (ER) and mitochondria. Components of this complex are involved in the control of mitochondrial shape and protein biogenesis, and function in nonvesicular lipid trafficking between the ER and mitochondria. MDM12 is required for the interaction of the ER-resident membrane protein MMM1 and the outer mitochondrial membrane-resident beta-barrel protein MDM10. The MDM12-MMM1 subcomplex functions in the major beta-barrel assembly pathway that is responsible for biogenesis of all mitochondrial outer membrane beta-barrel proteins, and acts in a late step after the SAM complex. The MDM10-MDM12-MMM1 subcomplex further acts in the TOM40-specific pathway after the action of the MDM12-MMM1 complex. Essential for establishing and maintaining the structure of mitochondria and maintenance of mtDNA nucleoids. This is Mitochondrial distribution and morphology protein 12 from Ajellomyces dermatitidis (strain ER-3 / ATCC MYA-2586) (Blastomyces dermatitidis).